We begin with the raw amino-acid sequence, 405 residues long: Nicotinate phosphoribosyltransferase (405 aa).

H230 bears the Phosphohistidine; by autocatalysis mark.

This sequence belongs to the NAPRTase family. Transiently phosphorylated on a His residue during the reaction cycle. Phosphorylation strongly increases the affinity for substrates and increases the rate of nicotinate D-ribonucleotide production. Dephosphorylation regenerates the low-affinity form of the enzyme, leading to product release.

The catalysed reaction is nicotinate + 5-phospho-alpha-D-ribose 1-diphosphate + ATP + H2O = nicotinate beta-D-ribonucleotide + ADP + phosphate + diphosphate. It participates in cofactor biosynthesis; NAD(+) biosynthesis; nicotinate D-ribonucleotide from nicotinate: step 1/1. Functionally, catalyzes the synthesis of beta-nicotinate D-ribonucleotide from nicotinate and 5-phospho-D-ribose 1-phosphate at the expense of ATP. This chain is Nicotinate phosphoribosyltransferase, found in Bordetella bronchiseptica (strain ATCC BAA-588 / NCTC 13252 / RB50) (Alcaligenes bronchisepticus).